The chain runs to 147 residues: Large ribosomal subunit protein uL13 (147 aa).

The protein belongs to the universal ribosomal protein uL13 family. In terms of assembly, part of the 50S ribosomal subunit.

Functionally, this protein is one of the early assembly proteins of the 50S ribosomal subunit, although it is not seen to bind rRNA by itself. It is important during the early stages of 50S assembly. In Streptomyces griseus subsp. griseus (strain JCM 4626 / CBS 651.72 / NBRC 13350 / KCC S-0626 / ISP 5235), this protein is Large ribosomal subunit protein uL13.